The chain runs to 158 residues: Transcription elongation factor GreA (158 aa).

It belongs to the GreA/GreB family.

In terms of biological role, necessary for efficient RNA polymerase transcription elongation past template-encoded arresting sites. The arresting sites in DNA have the property of trapping a certain fraction of elongating RNA polymerases that pass through, resulting in locked ternary complexes. Cleavage of the nascent transcript by cleavage factors such as GreA or GreB allows the resumption of elongation from the new 3'terminus. GreA releases sequences of 2 to 3 nucleotides. This chain is Transcription elongation factor GreA, found in Agrobacterium fabrum (strain C58 / ATCC 33970) (Agrobacterium tumefaciens (strain C58)).